The chain runs to 1312 residues: Tetratricopeptide repeat protein 21B (1312 aa).

TPR repeat units follow at residues 4–38 (TDHY…YSND), 110–143 (PKAL…SNRS), 147–180 (LVLR…NKDI), 182–213 (ALIG…YPPF), 214–247 (LPAL…DGAN), and 325–358 (AEVA…DGNH). Residues 365 to 392 (VIQCQILQGQLEEAEQQLDFLHEIQESI) are a coiled coil. 16 TPR repeats span residues 493–526 (TEPL…DTAC), 528–560 (DFHL…NFKV), 564–597 (PLYH…QEMK), 615–648 (VSIY…FGGT), 720–753 (PHTS…NPQD), 755–787 (SLAN…SGQD), 789–820 (LCCD…EPVS), 829–861 (AKCL…QQRI), 881–914 (SEIC…SQDS), 916–947 (VKLQ…HSFK), 948–981 (EEAA…NPDN), 983–1015 (AVLS…SSRT), 1019–1052 (PGYN…SEWG), 1193–1226 (EKSW…NKSC), 1228–1260 (KAYE…SNQS), and 1262–1295 (PAVG…HPTY).

It belongs to the TTC21 family. In terms of assembly, component of the IFT complex A (IFT-A).

Component of the IFT complex A (IFT-A), a complex required for retrograde ciliary transport and entry into cilia of G protein-coupled receptors (GPCRs). Negatively modulates the SHH signal transduction. The sequence is that of Tetratricopeptide repeat protein 21B (ttc21b) from Xenopus laevis (African clawed frog).